The sequence spans 466 residues: Probable periplasmic serine protease do/HhoA-like (466 aa).

Residues 1–29 (MKKTRFVLNSIALGLSVLSTSFVAHVAQA) form the signal peptide. Catalysis depends on charge relay system residues H120, D150, and S226. PDZ domains lie at 270-361 (ILEF…LRDG) and 367-458 (KMKL…LRGD).

This sequence belongs to the peptidase S1C family.

The protein localises to the periplasm. In Haemophilus influenzae (strain ATCC 51907 / DSM 11121 / KW20 / Rd), this protein is Probable periplasmic serine protease do/HhoA-like.